The sequence spans 294 residues: Putative maltodextrin utilization protein YvdJ (294 aa).

A run of 4 helical transmembrane segments spans residues 35 to 55, 184 to 204, 228 to 248, and 249 to 269; these read LSFL…VSFV, MIMM…TFVL, IAIC…MVHF, and DLIT…SFAF.

Its subcellular location is the cell membrane. Could have a role in maltodextrin utilization. In Bacillus subtilis (strain 168), this protein is Putative maltodextrin utilization protein YvdJ (yvdJ).